A 178-amino-acid chain; its full sequence is Small ribosomal subunit protein uS4 (178 aa).

The region spanning 104 to 166 (RRLQTIVFRK…SNSPMASENH (63 aa)) is the S4 RNA-binding domain. The tract at residues 158–178 (NSPMASENHPERTAATSEENQ) is disordered.

This sequence belongs to the universal ribosomal protein uS4 family. In terms of assembly, part of the 30S ribosomal subunit. Contacts protein S5. The interaction surface between S4 and S5 is involved in control of translational fidelity.

In terms of biological role, one of the primary rRNA binding proteins, it binds directly to 16S rRNA where it nucleates assembly of the body of the 30S subunit. With S5 and S12 plays an important role in translational accuracy. The chain is Small ribosomal subunit protein uS4 from Methanococcus maripaludis (strain DSM 14266 / JCM 13030 / NBRC 101832 / S2 / LL).